The chain runs to 123 residues: Class II hydrophobin 2 (123 aa).

The signal sequence occupies residues 1 to 16; the sequence is MRSFLVIATLAVGAFG. 4 disulfide bridges follow: Cys-22–Cys-70, Cys-32–Cys-61, Cys-33–Cys-45, and Cys-71–Cys-82.

This sequence belongs to the cerato-ulmin hydrophobin family. Homodimer. Homodimers further self-assemble to form highly ordered films at water-air interfaces through intermolecular interactions.

It localises to the secreted. Its subcellular location is the cell wall. Its function is as follows. Aerial growth, conidiation, and dispersal of filamentous fungi in the environment rely upon a capability of their secreting small amphipathic proteins called hydrophobins (HPBs) with low sequence identity. Class I can self-assemble into an outermost layer of rodlet bundles on aerial cell surfaces, conferring cellular hydrophobicity that supports fungal growth, development and dispersal; whereas Class II form highly ordered films at water-air interfaces through intermolecular interactions but contribute nothing to the rodlet structure. Hyd2 is a class II hydrophobin that plays probably a role in intraspecific signaling or hyphal fusion. Not necessary for root adhesion and colonization. Might play an essential role since no deletion mutants could be obtained. This Bionectria ochroleuca (Gliocladium roseum) protein is Class II hydrophobin 2.